We begin with the raw amino-acid sequence, 261 residues long: Cytochrome c oxidase subunit 3 (261 aa).

Residues 1 to 15 (MTHQTHAYHMVNPSP) lie on the Mitochondrial matrix side of the membrane. The helical transmembrane segment at 16-34 (WPLTGALSALLLTSGLMMW) threads the bilayer. The Mitochondrial intermembrane portion of the chain corresponds to 35-40 (FHFNNP). Residues 41–66 (TLLVLGLLTNLISSYQWWRDIVREGT) traverse the membrane as a helical segment. The Mitochondrial matrix portion of the chain corresponds to 67–72 (YQGHHT). The chain crosses the membrane as a helical span at residues 73–105 (KVVQKGLRYGMVLFIISEVFFFLGFFWAFYHSS). At 106 to 128 (LAPTPELGGCWPPTGISPLNPLE) the chain is on the mitochondrial intermembrane side. Residues 129–152 (VPLLNTSILLASGVSITWSHHSLM) traverse the membrane as a helical segment. The Mitochondrial matrix segment spans residues 153-155 (EGN). Residues 156 to 183 (RKQMIQALMITIALGLYFTALQAMEYYE) traverse the membrane as a helical segment. The Mitochondrial intermembrane segment spans residues 184–190 (SSFTISD). A helical membrane pass occupies residues 191–223 (GVYGSTFFVATGFHGLHVIIGTTFLITCLLRQL). The Mitochondrial matrix segment spans residues 224-232 (LYHFTSNHH). The chain crosses the membrane as a helical span at residues 233–256 (FGFEAAAWYWHFVDVVWLFLYVSI). Over 257–261 (YWWGS) the chain is Mitochondrial intermembrane.

This sequence belongs to the cytochrome c oxidase subunit 3 family. In terms of assembly, component of the cytochrome c oxidase (complex IV, CIV), a multisubunit enzyme composed of 14 subunits. The complex is composed of a catalytic core of 3 subunits MT-CO1, MT-CO2 and MT-CO3, encoded in the mitochondrial DNA, and 11 supernumerary subunits COX4I, COX5A, COX5B, COX6A, COX6B, COX6C, COX7A, COX7B, COX7C, COX8 and NDUFA4, which are encoded in the nuclear genome. The complex exists as a monomer or a dimer and forms supercomplexes (SCs) in the inner mitochondrial membrane with NADH-ubiquinone oxidoreductase (complex I, CI) and ubiquinol-cytochrome c oxidoreductase (cytochrome b-c1 complex, complex III, CIII), resulting in different assemblies (supercomplex SCI(1)III(2)IV(1) and megacomplex MCI(2)III(2)IV(2)).

It is found in the mitochondrion inner membrane. It carries out the reaction 4 Fe(II)-[cytochrome c] + O2 + 8 H(+)(in) = 4 Fe(III)-[cytochrome c] + 2 H2O + 4 H(+)(out). In terms of biological role, component of the cytochrome c oxidase, the last enzyme in the mitochondrial electron transport chain which drives oxidative phosphorylation. The respiratory chain contains 3 multisubunit complexes succinate dehydrogenase (complex II, CII), ubiquinol-cytochrome c oxidoreductase (cytochrome b-c1 complex, complex III, CIII) and cytochrome c oxidase (complex IV, CIV), that cooperate to transfer electrons derived from NADH and succinate to molecular oxygen, creating an electrochemical gradient over the inner membrane that drives transmembrane transport and the ATP synthase. Cytochrome c oxidase is the component of the respiratory chain that catalyzes the reduction of oxygen to water. Electrons originating from reduced cytochrome c in the intermembrane space (IMS) are transferred via the dinuclear copper A center (CU(A)) of subunit 2 and heme A of subunit 1 to the active site in subunit 1, a binuclear center (BNC) formed by heme A3 and copper B (CU(B)). The BNC reduces molecular oxygen to 2 water molecules using 4 electrons from cytochrome c in the IMS and 4 protons from the mitochondrial matrix. This chain is Cytochrome c oxidase subunit 3 (MT-CO3), found in Tachyglossus aculeatus aculeatus (Southeast Australian short-beaked echidna).